A 141-amino-acid polypeptide reads, in one-letter code: Galactose-6-phosphate isomerase subunit LacA (141 aa).

This sequence belongs to the LacAB/RpiB family. In terms of assembly, heteromultimeric protein consisting of LacA and LacB.

It catalyses the reaction aldehydo-D-galactose 6-phosphate = keto-D-tagatose 6-phosphate. The protein operates within carbohydrate metabolism; D-galactose 6-phosphate degradation; D-tagatose 6-phosphate from D-galactose 6-phosphate: step 1/1. This Streptococcus agalactiae serotype Ia (strain ATCC 27591 / A909 / CDC SS700) protein is Galactose-6-phosphate isomerase subunit LacA.